A 122-amino-acid polypeptide reads, in one-letter code: Holo-[acyl-carrier-protein] synthase (122 aa).

Residues D8 and E60 each coordinate Mg(2+).

The protein belongs to the P-Pant transferase superfamily. AcpS family. Mg(2+) serves as cofactor.

It is found in the cytoplasm. The enzyme catalyses apo-[ACP] + CoA = holo-[ACP] + adenosine 3',5'-bisphosphate + H(+). Its function is as follows. Transfers the 4'-phosphopantetheine moiety from coenzyme A to a Ser of acyl-carrier-protein. This Anaplasma phagocytophilum (strain HZ) protein is Holo-[acyl-carrier-protein] synthase.